A 201-amino-acid polypeptide reads, in one-letter code: ATP-dependent Clp protease proteolytic subunit (201 aa).

Ser98 acts as the Nucleophile in catalysis. His123 is an active-site residue.

This sequence belongs to the peptidase S14 family. Fourteen ClpP subunits assemble into 2 heptameric rings which stack back to back to give a disk-like structure with a central cavity, resembling the structure of eukaryotic proteasomes.

It is found in the cytoplasm. It carries out the reaction Hydrolysis of proteins to small peptides in the presence of ATP and magnesium. alpha-casein is the usual test substrate. In the absence of ATP, only oligopeptides shorter than five residues are hydrolyzed (such as succinyl-Leu-Tyr-|-NHMec, and Leu-Tyr-Leu-|-Tyr-Trp, in which cleavage of the -Tyr-|-Leu- and -Tyr-|-Trp bonds also occurs).. Cleaves peptides in various proteins in a process that requires ATP hydrolysis. Has a chymotrypsin-like activity. Plays a major role in the degradation of misfolded proteins. This is ATP-dependent Clp protease proteolytic subunit from Desulfatibacillum aliphaticivorans.